The sequence spans 631 residues: Phosphomethylpyrimidine synthase (631 aa).

Substrate contacts are provided by residues N239, M268, Y297, H333, 353–355, 394–397, and E433; these read SRG and DGLR. H437 is a Zn(2+) binding site. Y460 is a binding site for substrate. A Zn(2+)-binding site is contributed by H501. 3 residues coordinate [4Fe-4S] cluster: C581, C584, and C589.

It belongs to the ThiC family. As to quaternary structure, homodimer. [4Fe-4S] cluster is required as a cofactor.

It catalyses the reaction 5-amino-1-(5-phospho-beta-D-ribosyl)imidazole + S-adenosyl-L-methionine = 4-amino-2-methyl-5-(phosphooxymethyl)pyrimidine + CO + 5'-deoxyadenosine + formate + L-methionine + 3 H(+). It functions in the pathway cofactor biosynthesis; thiamine diphosphate biosynthesis. Its function is as follows. Catalyzes the synthesis of the hydroxymethylpyrimidine phosphate (HMP-P) moiety of thiamine from aminoimidazole ribotide (AIR) in a radical S-adenosyl-L-methionine (SAM)-dependent reaction. The sequence is that of Phosphomethylpyrimidine synthase from Escherichia coli O6:H1 (strain CFT073 / ATCC 700928 / UPEC).